The primary structure comprises 456 residues: uncharacterized protein (456 aa).

Residues 2–60 (AMRKGKEYELNIEEIEFPSMGIAYHEGLKVYVKHGIPGQKVLARITTKKKDHAKGKIIE) enclose the TRAM domain. C73, C79, C82, and C162 together coordinate [4Fe-4S] cluster. Residues Q288, Y317, E338, and D383 each coordinate S-adenosyl-L-methionine. C410 (nucleophile) is an active-site residue.

It belongs to the class I-like SAM-binding methyltransferase superfamily. RNA M5U methyltransferase family.

This is an uncharacterized protein from Clostridium tetani (strain Massachusetts / E88).